We begin with the raw amino-acid sequence, 235 residues long: Ribonuclease 3 (235 aa).

In terms of domain architecture, RNase III spans 6 to 131 (IDQLEKLTGH…LIAVIYLDGG (126 aa)). Residue Glu-44 coordinates Mg(2+). Asp-48 is an active-site residue. Mg(2+) contacts are provided by Asp-117 and Glu-120. Residue Glu-120 is part of the active site. The DRBM domain maps to 156–225 (DAKTQLQEWA…AEKILRREGI (70 aa)).

This sequence belongs to the ribonuclease III family. Homodimer. Mg(2+) is required as a cofactor.

The protein resides in the cytoplasm. It catalyses the reaction Endonucleolytic cleavage to 5'-phosphomonoester.. Digests double-stranded RNA. Involved in the processing of primary rRNA transcript to yield the immediate precursors to the large and small rRNAs (23S and 16S). Processes some mRNAs, and tRNAs when they are encoded in the rRNA operon. Processes pre-crRNA and tracrRNA of type II CRISPR loci if present in the organism. In Bartonella henselae (strain ATCC 49882 / DSM 28221 / CCUG 30454 / Houston 1) (Rochalimaea henselae), this protein is Ribonuclease 3.